Here is an 886-residue protein sequence, read N- to C-terminus: Alanine--tRNA ligase (886 aa).

Zn(2+) is bound by residues H568, H572, C670, and H674.

The protein belongs to the class-II aminoacyl-tRNA synthetase family. The cofactor is Zn(2+).

Its subcellular location is the cytoplasm. The catalysed reaction is tRNA(Ala) + L-alanine + ATP = L-alanyl-tRNA(Ala) + AMP + diphosphate. Catalyzes the attachment of alanine to tRNA(Ala) in a two-step reaction: alanine is first activated by ATP to form Ala-AMP and then transferred to the acceptor end of tRNA(Ala). Also edits incorrectly charged Ser-tRNA(Ala) and Gly-tRNA(Ala) via its editing domain. The sequence is that of Alanine--tRNA ligase from Prochlorococcus marinus (strain NATL1A).